The primary structure comprises 201 residues: Sterile alpha motif domain-containing protein 12 (201 aa).

One can recognise an SAM domain in the interval W77–R143.

The protein is Sterile alpha motif domain-containing protein 12 (SAMD12) of Pongo abelii (Sumatran orangutan).